A 251-amino-acid polypeptide reads, in one-letter code: Triosephosphate isomerase (251 aa).

Asn9–Lys11 serves as a coordination point for substrate. The active-site Electrophile is His95. Glu167 serves as the catalytic Proton acceptor. Substrate contacts are provided by residues Gly173, Ser212, and Gly233–Gly234.

This sequence belongs to the triosephosphate isomerase family. In terms of assembly, homodimer.

The protein resides in the cytoplasm. It catalyses the reaction D-glyceraldehyde 3-phosphate = dihydroxyacetone phosphate. It functions in the pathway carbohydrate biosynthesis; gluconeogenesis. The protein operates within carbohydrate degradation; glycolysis; D-glyceraldehyde 3-phosphate from glycerone phosphate: step 1/1. Its function is as follows. Involved in the gluconeogenesis. Catalyzes stereospecifically the conversion of dihydroxyacetone phosphate (DHAP) to D-glyceraldehyde-3-phosphate (G3P). This chain is Triosephosphate isomerase, found in Pseudomonas syringae pv. syringae (strain B728a).